Consider the following 134-residue polypeptide: Pro-opiomelanocortin (134 aa).

Residue Ser1 is modified to N-acetylserine. Val13 is modified (valine amide). Position 31 is a phosphoserine (Ser31). Basic and acidic residues-rich tracts occupy residues 43 to 52 (LARERPEPAR) and 79 to 104 (SAEKKDEGPYKMEHFRWGSPAKDKRY). Residues 43 to 107 (LARERPEPAR…PAKDKRYGGF (65 aa)) form a disordered region.

Belongs to the POMC family. In terms of processing, specific enzymatic cleavages at paired basic residues yield the different active peptides. As to expression, ACTH and MSH are produced by the pituitary gland.

The protein localises to the secreted. Functionally, stimulates the adrenal glands to release cortisol. Anorexigenic peptide. Increases the pigmentation of skin by increasing melanin production in melanocytes. In terms of biological role, increases the pigmentation of skin by increasing melanin production in melanocytes. Its function is as follows. Endogenous orexigenic opiate. Functionally, endogenous opiate. In Loxodonta africana (African elephant), this protein is Pro-opiomelanocortin (POMC).